We begin with the raw amino-acid sequence, 158 residues long: PTS system fructose-specific EIIB component (158 aa).

The PTS EIIB type-2 domain maps to 1-98; sequence MKLVAVTSCP…AEAVVQKAVE (98 aa). Cys9 (phosphocysteine intermediate) is an active-site residue. Position 9 is a phosphocysteine; by EIIA (Cys9). Residues 104-147 form a disordered region; the sequence is KTGSVTFGSGDDGEDADVGADDSSDDADAAESDEPVRRGGDPEK. Positions 114–136 are enriched in acidic residues; the sequence is DDGEDADVGADDSSDDADAAESD. Residues 137 to 147 are compositionally biased toward basic and acidic residues; the sequence is EPVRRGGDPEK.

Its subcellular location is the cytoplasm. It catalyses the reaction D-fructose(out) + N(pros)-phospho-L-histidyl-[protein] = D-fructose 1-phosphate(in) + L-histidyl-[protein]. Functionally, the phosphoenolpyruvate-dependent sugar phosphotransferase system (sugar PTS), a major carbohydrate active transport system, catalyzes the phosphorylation of incoming sugar substrates concomitantly with their translocation across the cell membrane. The enzyme II PtfABC PTS system is involved in fructose transport. The sequence is that of PTS system fructose-specific EIIB component from Haloferax volcanii (strain ATCC 29605 / DSM 3757 / JCM 8879 / NBRC 14742 / NCIMB 2012 / VKM B-1768 / DS2) (Halobacterium volcanii).